A 608-amino-acid polypeptide reads, in one-letter code: ABC transporter ATP-binding protein RamB (608 aa).

5 helical membrane-spanning segments follow: residues 25-45, 66-86, 141-161, 166-186, and 253-273; these read GVLV…FLVG, LWLG…RGVF, GLVL…LGLL, ALLV…LVTL, and AALG…VEWL. The ABC transmembrane type-1 domain occupies 30-296; the sequence is LALWSLAESG…FTYLVQSLLP (267 aa). The disordered stretch occupies residues 321-362; that stretch reads GPEPEPEPEPEPEPEPELGSGLEPEPEPASEPESGPSTASAS. Residues 324–336 show a composition bias toward acidic residues; that stretch reads PEPEPEPEPEPEP. A compositionally biased stretch (low complexity) spans 351–362; the sequence is EPESGPSTASAS. An ABC transporter domain is found at 376-605; the sequence is VELRSVTLSY…SPLYRDLTGH (230 aa). Residue 410–417 coordinates ATP; that stretch reads GPSGIGKS.

This sequence belongs to the ABC transporter superfamily.

It localises to the cell membrane. In terms of biological role, probably involved in exporting SapB from the cell. Expression of the ram locus (ramA, ramB and ramR) induces rapid aerial mycelium formation in S.lividans. In Streptomyces coelicolor (strain ATCC BAA-471 / A3(2) / M145), this protein is ABC transporter ATP-binding protein RamB.